We begin with the raw amino-acid sequence, 304 residues long: Dermonecrotic toxin LiSicTox-betaIA1ii (304 aa).

Positions 1-21 (MLLCAVISFIVYAVFLQEANG) are cleaved as a signal peptide. Positions 22–26 (HAAER) are excised as a propeptide. Residue His-38 is part of the active site. Positions 58 and 60 each coordinate Mg(2+). Residue His-74 is the Nucleophile of the active site. Disulfide bonds link Cys-78-Cys-84 and Cys-80-Cys-223. Position 118 (Asp-118) interacts with Mg(2+).

This sequence belongs to the arthropod phospholipase D family. Class II subfamily. Mg(2+) is required as a cofactor. In terms of tissue distribution, expressed by the venom gland.

It is found in the secreted. The catalysed reaction is an N-(acyl)-sphingosylphosphocholine = an N-(acyl)-sphingosyl-1,3-cyclic phosphate + choline. The enzyme catalyses an N-(acyl)-sphingosylphosphoethanolamine = an N-(acyl)-sphingosyl-1,3-cyclic phosphate + ethanolamine. It catalyses the reaction a 1-acyl-sn-glycero-3-phosphocholine = a 1-acyl-sn-glycero-2,3-cyclic phosphate + choline. It carries out the reaction a 1-acyl-sn-glycero-3-phosphoethanolamine = a 1-acyl-sn-glycero-2,3-cyclic phosphate + ethanolamine. Functionally, dermonecrotic toxins cleave the phosphodiester linkage between the phosphate and headgroup of certain phospholipids (sphingolipid and lysolipid substrates), forming an alcohol (often choline) and a cyclic phosphate. This toxin acts on sphingomyelin (SM) with low activity. It may also act on ceramide phosphoethanolamine (CPE), lysophosphatidylcholine (LPC) and lysophosphatidylethanolamine (LPE), but not on lysophosphatidylserine (LPS), and lysophosphatidylglycerol (LPG). It acts by transphosphatidylation, releasing exclusively cyclic phosphate products as second products. Induces dermonecrosis, hemolysis, increased vascular permeability, edema, inflammatory response, and platelet aggregation. In Loxosceles intermedia (Brown spider), this protein is Dermonecrotic toxin LiSicTox-betaIA1ii.